The sequence spans 266 residues: MNRYSNAFARLKAGSRGAFVPFVTLGDPGIDESLAIIDALVEGGADCLELGFPFSDPLADGPVIQGANIRALAAGTTPDTCFKMIEQIRAKYPELPIGLLLYANLVFANGIEAFYQRAKAAGVDSVLIADVPAEESAPFVAAARAEGIAPIFIAPPNASADTLRLVASLGEGYTYLLSRAGVTGADNKAGMPLDSVLSALKEFNAPPPLLGFGIAEPSQVQEAIAAGAAGAISGSAVVKRIEALKDDMPKLLTELKSFASAMKAAT.

Catalysis depends on proton acceptor residues E49 and D60.

Belongs to the TrpA family. In terms of assembly, tetramer of two alpha and two beta chains.

The catalysed reaction is (1S,2R)-1-C-(indol-3-yl)glycerol 3-phosphate + L-serine = D-glyceraldehyde 3-phosphate + L-tryptophan + H2O. It functions in the pathway amino-acid biosynthesis; L-tryptophan biosynthesis; L-tryptophan from chorismate: step 5/5. In terms of biological role, the alpha subunit is responsible for the aldol cleavage of indoleglycerol phosphate to indole and glyceraldehyde 3-phosphate. The protein is Tryptophan synthase alpha chain of Shewanella amazonensis (strain ATCC BAA-1098 / SB2B).